The following is a 380-amino-acid chain: Cytochrome b (380 aa).

4 consecutive transmembrane segments (helical) span residues 34-54, 78-99, 114-134, and 179-199; these read FGSL…LLAM, WLIR…YLHI, WNTG…GYVL, and FFAL…IHLT. Heme b is bound by residues His-84 and His-98. Residues His-183 and His-197 each coordinate heme b. His-202 lines the a ubiquinone pocket. 4 consecutive transmembrane segments (helical) span residues 227–247, 289–309, 321–341, and 348–368; these read LKDA…ALFS, LGGV…PLLH, LSQL…WVGS, and FIII…ILFP.

This sequence belongs to the cytochrome b family. The cytochrome bc1 complex contains 11 subunits: 3 respiratory subunits (MT-CYB, CYC1 and UQCRFS1), 2 core proteins (UQCRC1 and UQCRC2) and 6 low-molecular weight proteins (UQCRH/QCR6, UQCRB/QCR7, UQCRQ/QCR8, UQCR10/QCR9, UQCR11/QCR10 and a cleavage product of UQCRFS1). This cytochrome bc1 complex then forms a dimer. It depends on heme b as a cofactor.

The protein localises to the mitochondrion inner membrane. Component of the ubiquinol-cytochrome c reductase complex (complex III or cytochrome b-c1 complex) that is part of the mitochondrial respiratory chain. The b-c1 complex mediates electron transfer from ubiquinol to cytochrome c. Contributes to the generation of a proton gradient across the mitochondrial membrane that is then used for ATP synthesis. This chain is Cytochrome b (MT-CYB), found in Oceanites oceanicus (Wilson's storm petrel).